The chain runs to 245 residues: 3-deoxy-manno-octulosonate cytidylyltransferase (245 aa).

Belongs to the KdsB family.

It is found in the cytoplasm. The catalysed reaction is 3-deoxy-alpha-D-manno-oct-2-ulosonate + CTP = CMP-3-deoxy-beta-D-manno-octulosonate + diphosphate. It participates in nucleotide-sugar biosynthesis; CMP-3-deoxy-D-manno-octulosonate biosynthesis; CMP-3-deoxy-D-manno-octulosonate from 3-deoxy-D-manno-octulosonate and CTP: step 1/1. The protein operates within bacterial outer membrane biogenesis; lipopolysaccharide biosynthesis. Functionally, activates KDO (a required 8-carbon sugar) for incorporation into bacterial lipopolysaccharide in Gram-negative bacteria. The chain is 3-deoxy-manno-octulosonate cytidylyltransferase from Rhodopseudomonas palustris (strain TIE-1).